A 107-amino-acid chain; its full sequence is Lipid-anchored protein YDL012C (107 aa).

Over residues 1–18 the composition is skewed to polar residues; sequence MSAQDYYGNSASKQSYSR. A disordered region spans residues 1-86; the sequence is MSAQDYYGNS…VQQQPASSGN (86 aa). N-acetylserine is present on S2. K13 is covalently cross-linked (Glycyl lysine isopeptide (Lys-Gly) (interchain with G-Cter in ubiquitin)). The segment covering 35–81 has biased composition (low complexity); the sequence is PSQSQQNYYPPQQQQQQYQQQPQYYQQQQPQYYQQHPQQPIYVQQQP.

The protein belongs to the CYSTM1 family.

It is found in the cell membrane. In Saccharomyces cerevisiae (strain ATCC 204508 / S288c) (Baker's yeast), this protein is Lipid-anchored protein YDL012C.